The primary structure comprises 197 residues: Probable deoxycytidylate deaminase (197 aa).

The CMP/dCMP-type deaminase domain occupies 49–183 (KKHQRFLRIA…KMLDHARLPY (135 aa)). Position 117 (H117) interacts with Zn(2+). The active-site Proton donor is the E119. Zn(2+) is bound by residues C143 and C146.

The protein belongs to the cytidine and deoxycytidylate deaminase family. The cofactor is Zn(2+).

It carries out the reaction dCMP + H2O + H(+) = dUMP + NH4(+). Supplies the nucleotide substrate for thymidylate synthetase. This Caenorhabditis elegans protein is Probable deoxycytidylate deaminase.